Consider the following 618-residue polypeptide: UvrABC system protein C (618 aa).

The GIY-YIG domain occupies 15–93 (RTPGVYLMKD…IKEHHPRYNI (79 aa)). A UVR domain is found at 203–238 (NNLLRELRERMKMAAEQMNYEEAAFLRDRIRAIEET).

The protein belongs to the UvrC family. In terms of assembly, interacts with UvrB in an incision complex.

Its subcellular location is the cytoplasm. Functionally, the UvrABC repair system catalyzes the recognition and processing of DNA lesions. UvrC both incises the 5' and 3' sides of the lesion. The N-terminal half is responsible for the 3' incision and the C-terminal half is responsible for the 5' incision. The protein is UvrABC system protein C of Syntrophus aciditrophicus (strain SB).